We begin with the raw amino-acid sequence, 72 residues long: Disintegrin batroxostatin (72 aa).

The region spanning 1-72 (EAGEECDCGA…SADCPRNRFY (72 aa)) is the Disintegrin domain. 6 disulfides stabilise this stretch: cysteine 6–cysteine 21, cysteine 8–cysteine 16, cysteine 15–cysteine 38, cysteine 29–cysteine 35, cysteine 34–cysteine 59, and cysteine 47–cysteine 66. A Cell attachment site motif is present at residues 51–53 (RGD). The segment at 52-72 (GDNPDDRCTGQSADCPRNRFY) is disordered.

Belongs to the venom metalloproteinase (M12B) family. P-II subfamily. P-IIa sub-subfamily. As to quaternary structure, monomer. As to expression, expressed by the venom gland.

Its subcellular location is the secreted. Functionally, inhibits fibrinogen interaction with platelets. Acts by binding to the glycoprotein IIb-IIIa receptor (ITGA2B/ITGB3) on the platelet surface and inhibits aggregation induced by ADP, thrombin, platelet-activating factor and collagen. Also inhibits T24 and SK-Mel-28 cell adhesion to fibronectin with IC(50) of 4.4 uM and 33 nM, respectively. This Bothrops atrox (Barba amarilla) protein is Disintegrin batroxostatin.